The sequence spans 324 residues: Probable UDP-sugar transporter protein SLC35A4 (324 aa).

The Cytoplasmic portion of the chain corresponds to 1–18; sequence MSVEDGGMPGLARPKQAR. Residues 19-39 form a helical membrane-spanning segment; the sequence is WTLMLFLSTAMYGAHAPFLAL. Topologically, residues 40–52 are lumenal; sequence CHVDGRVPFRPSS. A helical transmembrane segment spans residues 53–73; that stretch reads AVLLTELTKLLLCAFSLLVGW. The Cytoplasmic segment spans residues 74–85; the sequence is QTWPQGTPPWRQ. Residues 86-106 traverse the membrane as a helical segment; the sequence is AAPFALSALLYGANNNLVIYL. Residues 107 to 142 lie on the Lumenal side of the membrane; it reads QRYMDPSTYQVLSNLKIGSTALLYCLCLGHRLSARQ. Residues 143-163 form a helical membrane-spanning segment; sequence GLALLLLMAAGACYASGGFQE. Topologically, residues 164–180 are cytoplasmic; that stretch reads PGNTLPGPRSAAGARPM. The chain crosses the membrane as a helical span at residues 181–201; that stretch reads PLHITPLGLLLLILYCLISGL. At 202-214 the chain is on the lumenal side; it reads SSVYTELIMKRQR. Residues 215-235 form a helical membrane-spanning segment; that stretch reads LPLALQNLFLYTFGVILNLGL. The Cytoplasmic segment spans residues 236-248; sequence YAGSGPGPGFLEG. Residues 249 to 271 traverse the membrane as a helical segment; the sequence is FSGWAVLVVLNQAVNGLLMSAVM. Residues 272 to 279 lie on the Lumenal side of the membrane; the sequence is KHGSSITR. Residues 280-300 traverse the membrane as a helical segment; sequence LFIVSCSLVVNAVLSAVLLQL. Residues 301–324 lie on the Cytoplasmic side of the membrane; the sequence is QLTATFFLAALLIGLAVCLYYGSP.

This sequence belongs to the nucleotide-sugar transporter family. SLC35A subfamily. In terms of assembly, found in a complex with SLC35A2 and SLC35A3. Expressed in the kidney, lung, testis, and prostate. Expressed in the brain by sets of neurons, such as the pyramidal cells of the cortex, the Purkinje cells of the cerebellum, and the motoneurons of the brainstem.

It is found in the golgi apparatus membrane. The catalysed reaction is CDP-L-ribitol(in) + CDP(out) = CDP-L-ribitol(out) + CDP(in). In terms of biological role, mediates the transport of CDP-ribitol. Does not exhibit CMP-sialic acid, UDP-galactose and UDP-N-acetylglucosamine transport activity. The polypeptide is Probable UDP-sugar transporter protein SLC35A4 (Rattus norvegicus (Rat)).